A 197-amino-acid chain; its full sequence is Guanylate kinase (197 aa).

The disordered stretch occupies residues methionine 1–lysine 30. One can recognise a Guanylate kinase-like domain in the interval proline 17–valine 197. Glycine 24 to serine 31 provides a ligand contact to ATP.

The protein belongs to the guanylate kinase family.

It localises to the cytoplasm. The enzyme catalyses GMP + ATP = GDP + ADP. Its function is as follows. Essential for recycling GMP and indirectly, cGMP. This chain is Guanylate kinase (gmk), found in Streptomyces coelicolor (strain ATCC BAA-471 / A3(2) / M145).